Consider the following 135-residue polypeptide: uncharacterized protein (135 aa).

This is an uncharacterized protein from Methanocaldococcus jannaschii (strain ATCC 43067 / DSM 2661 / JAL-1 / JCM 10045 / NBRC 100440) (Methanococcus jannaschii).